The following is a 201-amino-acid chain: Orotate phosphoribosyltransferase (201 aa).

113-121 is a binding site for 5-phospho-alpha-D-ribose 1-diphosphate; the sequence is EDIITTGKS. Thr117 and Arg145 together coordinate orotate.

This sequence belongs to the purine/pyrimidine phosphoribosyltransferase family. PyrE subfamily. As to quaternary structure, homodimer. Requires Mg(2+) as cofactor.

The catalysed reaction is orotidine 5'-phosphate + diphosphate = orotate + 5-phospho-alpha-D-ribose 1-diphosphate. It participates in pyrimidine metabolism; UMP biosynthesis via de novo pathway; UMP from orotate: step 1/2. Catalyzes the transfer of a ribosyl phosphate group from 5-phosphoribose 1-diphosphate to orotate, leading to the formation of orotidine monophosphate (OMP). The polypeptide is Orotate phosphoribosyltransferase (Helicobacter pylori (strain ATCC 700392 / 26695) (Campylobacter pylori)).